The chain runs to 818 residues: Sorting nexin-29 (818 aa).

The 145-residue stretch at 36–180 (SDSDSRVTCL…ILFAINIDNK (145 aa)) folds into the RUN domain. Residues 267-299 (VSFDDDEEEQGTGDTLKKMPGTAESSEENSDRS) form a disordered region. Phosphoserine is present on residues serine 268, serine 291, serine 292, serine 330, serine 344, serine 447, and serine 452. 2 disordered regions span residues 343–375 (KSID…PDRT) and 441–462 (RYRE…PSAS). The span at 445–462 (ASSPGQGSPLSSLLPSAS) shows a compositional bias: low complexity. Positions 467–547 (MTVHELRQAI…VLKVQLKKYV (81 aa)) form a coiled coil. Serine 642 carries the post-translational modification Phosphoserine. Position 644 is a phosphothreonine (threonine 644). Phosphoserine occurs at positions 645 and 649. The 124-residue stretch at 659–782 (ALINVWIPSV…PFFVDITPPG (124 aa)) folds into the PX domain. Residues 781–818 (PGEPLNKSSRPKAVSRFPKLSRGHPREVRNVEPQSGDL) are disordered.

The protein belongs to the sorting nexin family.

This is Sorting nexin-29 (Snx29) from Mus musculus (Mouse).